Consider the following 660-residue polypeptide: Putative ATP-dependent RNA helicase Pl10 (660 aa).

A compositionally biased stretch (acidic residues) spans 1-11 (MSHVAEEDELG). Residues 1–117 (MSHVAEEDEL…SRGGRSGFGK (117 aa)) are disordered. Ser2 is subject to N-acetylserine. Positions 12–21 (LDQQLAGLDL) are enriched in low complexity. Polar residues predominate over residues 24–34 (RDSQSGGSTAS). Residues 44–66 (RNREAAKAFYDKDGSRWSKDKDA) are compositionally biased toward basic and acidic residues. An N6-acetyllysine modification is found at Lys55. A phosphoserine mark is found at Ser80, Ser84, and Ser89. The segment covering 93–103 (GRFDERGRSDY) has biased composition (basic and acidic residues). Arg100 carries the post-translational modification Omega-N-methylarginine. A Phosphoserine modification is found at Ser101. Tyr103 is modified (phosphotyrosine). Position 109 is an omega-N-methylarginine (Arg109). Lys117 bears the N6-acetyllysine mark. A Q motif motif is present at residues 179–207 (ESFSDVEMGEIIMGNIELTRYTRPTPVQK). Position 182 is a phosphoserine (Ser182). ATP is bound at residue 199-206 (YTRPTPVQ). Positions 210–402 (IPIIKEKRDL…RDFLDEYIFL (193 aa)) constitute a Helicase ATP-binding domain. A Glycyl lysine isopeptide (Lys-Gly) (interchain with G-Cter in SUMO2) cross-link involves residue Lys214. 223–230 (AQTGSGKT) serves as a coordination point for ATP. A DEAD box motif is present at residues 346–349 (DEAD). The Helicase C-terminal domain maps to 413–574 (NITQKVVWVE…EVPSWLENMA (162 aa)). Ser455 is subject to Phosphoserine. Arg590 carries the omega-N-methylarginine modification. Ser592, Ser603, and Ser610 each carry phosphoserine. A disordered region spans residues 598–632 (RDYRQSSGASSSSFSSGRASNSRSGGGSHGSSRGF). A compositionally biased stretch (low complexity) spans 602–620 (QSSGASSSSFSSGRASNSR). 2 positions are modified to omega-N-methylarginine: Arg615 and Arg630. Residues 621–632 (SGGGSHGSSRGF) are compositionally biased toward gly residues.

This sequence belongs to the DEAD box helicase family. DDX3/DED1 subfamily. In terms of tissue distribution, testis.

It carries out the reaction ATP + H2O = ADP + phosphate + H(+). Putative ATP-dependent RNA helicase. Possible role in a key step of the spermatogenic process. This Mus musculus (Mouse) protein is Putative ATP-dependent RNA helicase Pl10 (D1Pas1).